Here is a 308-residue protein sequence, read N- to C-terminus: MKITPIAFESLGVRSQATLIETKDLRVLVDPAVSLAPRRYNLPPHQREVDRLTQLAKVLVDVAKDVDVIVVSHYHYDHHDPGYVIPTDIYKNKIVFLKDPQNMINNSQKYRRAPRFLRSIKDKPRKIEIADGKTFEFNTTTISFSPAVPHGADERLGYVIQVAISDKDSTVIFTSDIEGAPKDVHLKFTKEKMPTVIIIDGPLSYLLGRALKEEELENSIRNMEEIIKNGLETVIIDHHVLRDINYAQVLKPVHDIAKDLGVRVTTAAEYLNLEPLILEARRKELYKEDNRPAKIPRGLANLLNAGDG.

Belongs to the UPF0282 family.

The protein is UPF0282 protein SSO3251 of Saccharolobus solfataricus (strain ATCC 35092 / DSM 1617 / JCM 11322 / P2) (Sulfolobus solfataricus).